The chain runs to 226 residues: Uracil-DNA glycosylase (226 aa).

The active-site Proton acceptor is the Asp-64.

Belongs to the uracil-DNA glycosylase (UDG) superfamily. UNG family.

Its subcellular location is the cytoplasm. It carries out the reaction Hydrolyzes single-stranded DNA or mismatched double-stranded DNA and polynucleotides, releasing free uracil.. In terms of biological role, excises uracil residues from the DNA which can arise as a result of misincorporation of dUMP residues by DNA polymerase or due to deamination of cytosine. This chain is Uracil-DNA glycosylase, found in Photorhabdus laumondii subsp. laumondii (strain DSM 15139 / CIP 105565 / TT01) (Photorhabdus luminescens subsp. laumondii).